Reading from the N-terminus, the 325-residue chain is G-protein coupled receptor E6 (325 aa).

7 helical membrane passes run 45–65 (LFGT…MGFF), 71–91 (FTPS…LWLM), 106–126 (IVTE…NVGM), 145–165 (PAAI…VIAV), 198–218 (LVAK…GTAL), 233–253 (AICV…LTAM), and 274–294 (VFIY…MFTG).

Belongs to the G-protein coupled receptor 1 family.

It is found in the host membrane. The polypeptide is G-protein coupled receptor E6 (E6) (Equus caballus (Horse)).